A 451-amino-acid chain; its full sequence is GTPase Der (451 aa).

2 consecutive EngA-type G domains span residues 5–170 (PVVA…VEPE) and 186–359 (IKLA…AAAF). GTP-binding positions include 11 to 18 (GRPNVGKS), 58 to 62 (DTGGF), 122 to 125 (NKAE), 192 to 199 (GRPNVGKS), 239 to 243 (DTAGL), and 304 to 307 (NKWD). The 85-residue stretch at 360-444 (AKLSTPKLTR…PLRIEFKSSR (85 aa)) folds into the KH-like domain.

This sequence belongs to the TRAFAC class TrmE-Era-EngA-EngB-Septin-like GTPase superfamily. EngA (Der) GTPase family. In terms of assembly, associates with the 50S ribosomal subunit.

Functionally, GTPase that plays an essential role in the late steps of ribosome biogenesis. In Bordetella petrii (strain ATCC BAA-461 / DSM 12804 / CCUG 43448), this protein is GTPase Der.